We begin with the raw amino-acid sequence, 300 residues long: Protein FANTASTIC FOUR 4 (300 aa).

Over residues 30 to 56 the composition is skewed to polar residues; it reads PQLSTPLKSHFQNSSIAPQDNPITINA. Disordered stretches follow at residues 30 to 104, 142 to 170, and 227 to 264; these read PQLS…SPSS, TMET…LPPP, and TETK…KEEE. 2 stretches are compositionally biased toward low complexity: residues 58-88 and 142-151; these read SLPS…NSSS and TMETRTTSTT. One can recognise an FAF domain in the interval 166–217; the sequence is SLPPPLTSMIGFDCIEVKSHRENGRLVMMATRPPPRNRCLQDRSNGCVRLAI. The segment covering 233 to 262 has biased composition (acidic residues); sequence KEEEEEETIETVRDNEEEIPEYKEEEEEKE.

It belongs to the fantastic four family. As to expression, expressed in the shoot apex and young siliques. Detected in provascular and vascular tissue, but not in the vegetative meristem. In inflorescences, restricted to the base of the flower and to the vasculature of the stem and the pedicels, but absent from young flowers. Detected in the center of the inflorescence meristem.

Regulates the size of the shoot meristem by modulating the CLV3-WUS feedback loop. Can repress WUS but is under negative control by CLV3. The protein is Protein FANTASTIC FOUR 4 (FAF4) of Arabidopsis thaliana (Mouse-ear cress).